Here is a 998-residue protein sequence, read N- to C-terminus: Beta-galactosidase (998 aa).

The active-site Proton donor is the Glu-431. The active-site Nucleophile is the Glu-508.

The protein belongs to the glycosyl hydrolase 2 family.

The catalysed reaction is Hydrolysis of terminal non-reducing beta-D-galactose residues in beta-D-galactosides.. The polypeptide is Beta-galactosidase (lacZ) (Lactococcus lactis subsp. lactis (strain IL1403) (Streptococcus lactis)).